The primary structure comprises 62 residues: uncharacterized protein (62 aa).

Residues 1–62 (MSSTAEEMAA…SNGEAKRKEK (62 aa)) are disordered. Residues 28-37 (TKSDRVEHKH) show a composition bias toward basic and acidic residues.

This is an uncharacterized protein from Caenorhabditis elegans.